The chain runs to 639 residues: Putative cyclic beta-1,2-glucan modification protein (639 aa).

6 consecutive transmembrane segments (helical) span residues A34–W54, P69–G89, L96–L116, W144–L164, F185–I205, and F227–M247.

It localises to the cell membrane. This is Putative cyclic beta-1,2-glucan modification protein (cgmA) from Rhizobium meliloti (strain 1021) (Ensifer meliloti).